The chain runs to 636 residues: Protein SOSEKI 2 (636 aa).

Residues 9–103 form a DIX-like oligomerization domain region; the sequence is HKIEVIYLLS…YVLKALEVMD (95 aa). 4 disordered regions span residues 164-188, 281-304, 340-393, and 499-524; these read VHNN…SRVP, HGRL…TVDI, VEGS…TSAK, and LGSG…VSRP. Polar residues-rich tracts occupy residues 375–390 and 499–510; these read SSKS…TYET and LGSGQASESFSP.

The protein belongs to the SOSEKI family. In terms of assembly, homodimer. Forms long polymer filaments with other SOKs proteins polymers crucial for polar localization and biological activity.

The protein localises to the cell membrane. In terms of biological role, SOSEKI proteins locally interpret global polarity cues and can influence cell division orientation to coordinate cell polarization relative to body axes. The protein is Protein SOSEKI 2 of Physcomitrium patens (Spreading-leaved earth moss).